Here is a 199-residue protein sequence, read N- to C-terminus: UPF0462 protein C4orf33 (199 aa).

Belongs to the UPF0462 family.

This Homo sapiens (Human) protein is UPF0462 protein C4orf33 (C4orf33).